Here is a 579-residue protein sequence, read N- to C-terminus: UPF0324 membrane protein DVU_0943 (579 aa).

10 helical membrane-spanning segments follow: residues 26–45, 193–215, 225–243, 250–272, 305–327, 369–391, 430–452, 473–495, 515–533, and 546–568; these read YWAI…LFLA, AFNI…AIGM, FLVG…QMMG, YWGI…TVGT, IGIP…TFIF, LTLS…PAFI, AATI…AVYW, FPKF…GSLG, LRGW…ATNF, and LILY…YIMF.

The protein belongs to the UPF0324 family.

It localises to the cell membrane. This Nitratidesulfovibrio vulgaris (strain ATCC 29579 / DSM 644 / CCUG 34227 / NCIMB 8303 / VKM B-1760 / Hildenborough) (Desulfovibrio vulgaris) protein is UPF0324 membrane protein DVU_0943.